A 439-amino-acid polypeptide reads, in one-letter code: Serine/threonine-protein kinase 2 (439 aa).

One can recognise a Protein kinase domain in the interval Asn87 to Asn439. Residues Ile93–Val101 and Lys117 contribute to the ATP site. Asp307 serves as the catalytic Proton acceptor.

Belongs to the protein kinase superfamily. Ser/Thr protein kinase family. In terms of processing, phosphorylated in vivo. Autophosphorylated in vitro.

The protein resides in the host endoplasmic reticulum. Its subcellular location is the host endoplasmic reticulum-Golgi intermediate compartment. The catalysed reaction is L-seryl-[protein] + ATP = O-phospho-L-seryl-[protein] + ADP + H(+). It carries out the reaction L-threonyl-[protein] + ATP = O-phospho-L-threonyl-[protein] + ADP + H(+). Functionally, essential serine-protein kinase involved in the early stage of virion morphogenesis. In Vaccinia virus (strain Tian Tan) (VACV), this protein is Serine/threonine-protein kinase 2 (OPG054).